Reading from the N-terminus, the 140-residue chain is ATP synthase epsilon chain, chloroplastic (140 aa).

It belongs to the ATPase epsilon chain family. F-type ATPases have 2 components, CF(1) - the catalytic core - and CF(0) - the membrane proton channel. CF(1) has five subunits: alpha(3), beta(3), gamma(1), delta(1), epsilon(1). CF(0) has three main subunits: a, b and c.

Its subcellular location is the plastid. It is found in the chloroplast thylakoid membrane. Produces ATP from ADP in the presence of a proton gradient across the membrane. The protein is ATP synthase epsilon chain, chloroplastic of Panax ginseng (Korean ginseng).